A 119-amino-acid polypeptide reads, in one-letter code: Ribonuclease P protein component (119 aa).

Belongs to the RnpA family. As to quaternary structure, consists of a catalytic RNA component (M1 or rnpB) and a protein subunit.

It catalyses the reaction Endonucleolytic cleavage of RNA, removing 5'-extranucleotides from tRNA precursor.. RNaseP catalyzes the removal of the 5'-leader sequence from pre-tRNA to produce the mature 5'-terminus. It can also cleave other RNA substrates such as 4.5S RNA. The protein component plays an auxiliary but essential role in vivo by binding to the 5'-leader sequence and broadening the substrate specificity of the ribozyme. The polypeptide is Ribonuclease P protein component (Serratia proteamaculans (strain 568)).